The primary structure comprises 239 residues: tRNA (guanine-N(7)-)-methyltransferase (239 aa).

S-adenosyl-L-methionine-binding residues include Glu-69, Glu-94, Asp-121, and Asp-144. Asp-144 is an active-site residue. Lys-148 contacts substrate. The segment at 150-155 (RHNKRR) is interaction with RNA. Residues Asp-180 and 217 to 220 (TKFE) contribute to the substrate site.

Belongs to the class I-like SAM-binding methyltransferase superfamily. TrmB family. In terms of assembly, monomer.

It carries out the reaction guanosine(46) in tRNA + S-adenosyl-L-methionine = N(7)-methylguanosine(46) in tRNA + S-adenosyl-L-homocysteine. It functions in the pathway tRNA modification; N(7)-methylguanine-tRNA biosynthesis. Catalyzes the formation of N(7)-methylguanine at position 46 (m7G46) in tRNA. The chain is tRNA (guanine-N(7)-)-methyltransferase from Serratia proteamaculans (strain 568).